Reading from the N-terminus, the 147-residue chain is Transthyretin (147 aa).

The N-terminal stretch at 1 to 20 is a signal peptide; sequence MASHRLLLLCLAGLVFVSEA. Residue Cys30 is modified to Sulfocysteine. Lys35 contributes to the L-thyroxine binding site. The residue at position 62 (Glu62) is a 4-carboxyglutamate. Ser72 is subject to Phosphoserine. Glu74 contacts L-thyroxine. An N-linked (GlcNAc...) asparagine glycan is attached at Asn118. Ser137 serves as a coordination point for L-thyroxine.

Belongs to the transthyretin family. In terms of assembly, homotetramer. Dimer of dimers. In the homotetramer, subunits assemble around a central channel that can accommodate two ligand molecules. Interacts with RBP4. Sulfonation of the reactive cysteine Cys-30 enhances the stability of the native conformation of TTR, avoiding misassembly of the protein leading to amyloid formation. In terms of tissue distribution, detected in brain.

It is found in the secreted. In terms of biological role, thyroid hormone-binding protein. Probably transports thyroxine from the bloodstream to the brain. The chain is Transthyretin (TTR) from Pan troglodytes (Chimpanzee).